An 85-amino-acid polypeptide reads, in one-letter code: Protein AC4 (85 aa).

Residue G2 is the site of N-myristoyl glycine; by host attachment.

This sequence belongs to the geminiviridae protein AC4/C4 family. As to quaternary structure, interacts with Arabidopsis thaliana ASK7/ASK-eta and ASK6/ASK-zeta proteins. Post-translationally, phosphorylated by Arabidopsis thaliana ASK7/ASK-eta mainly on threonine and serine residues.

Its subcellular location is the host cell membrane. Pathogenicity determinant. May act as a suppressor of RNA-mediated gene silencing, also known as post-transcriptional gene silencing (PTGS), a mechanism of plant viral defense that limits the accumulation of viral RNAs. May repress the AL61 promoter. In Solanum lycopersicum (Tomato), this protein is Protein AC4.